Here is a 292-residue protein sequence, read N- to C-terminus: Phosphatidylglycerol--prolipoprotein diacylglyceryl transferase (292 aa).

7 helical membrane passes run 21–41 (VSLH…MWLA), 60–80 (LLYA…VLFY), 98–118 (GGMS…VFAH), 124–144 (FFQV…AGRL), 198–218 (SQLY…NLFI), 225–245 (GAVS…VEFF), and 258–278 (ISMG…MMIW). An a 1,2-diacyl-sn-glycero-3-phospho-(1'-sn-glycerol)-binding site is contributed by Arg-143.

This sequence belongs to the Lgt family.

It localises to the cell inner membrane. It carries out the reaction L-cysteinyl-[prolipoprotein] + a 1,2-diacyl-sn-glycero-3-phospho-(1'-sn-glycerol) = an S-1,2-diacyl-sn-glyceryl-L-cysteinyl-[prolipoprotein] + sn-glycerol 1-phosphate + H(+). Its pathway is protein modification; lipoprotein biosynthesis (diacylglyceryl transfer). In terms of biological role, catalyzes the transfer of the diacylglyceryl group from phosphatidylglycerol to the sulfhydryl group of the N-terminal cysteine of a prolipoprotein, the first step in the formation of mature lipoproteins. This Erwinia tasmaniensis (strain DSM 17950 / CFBP 7177 / CIP 109463 / NCPPB 4357 / Et1/99) protein is Phosphatidylglycerol--prolipoprotein diacylglyceryl transferase.